Here is a 215-residue protein sequence, read N- to C-terminus: Vesicle-trafficking protein SEC22b-A (215 aa).

Residues 1 to 190 (MVLQTMIVRV…RSDAKYLNTR (190 aa)) are Cytoplasmic-facing. Residues 6-119 (MIVRVADSLP…YSFIEFDTYI (114 aa)) form the Longin domain. In terms of domain architecture, v-SNARE coiled-coil homology spans 134–194 (NLGNINSELH…KYLNTRSTYA (61 aa)). Residues 191–213 (STYAKVAAGAVIIITLIIYVRFW) form a helical membrane-spanning segment. Over 214–215 (WL) the chain is Lumenal.

It belongs to the synaptobrevin family. As to quaternary structure, component of 2 distinct SNARE complexes.

The protein localises to the endoplasmic reticulum membrane. The protein resides in the endoplasmic reticulum-Golgi intermediate compartment membrane. It localises to the golgi apparatus. It is found in the cis-Golgi network membrane. Its subcellular location is the trans-Golgi network membrane. The protein localises to the melanosome. Functionally, SNARE involved in targeting and fusion of ER-derived transport vesicles with the Golgi complex as well as Golgi-derived retrograde transport vesicles with the ER. This is Vesicle-trafficking protein SEC22b-A from Danio rerio (Zebrafish).